The chain runs to 90 residues: Carboxysome shell vertex protein CsoS4A (90 aa).

The BMV domain maps to M1–D78.

The protein belongs to the CcmL/EutN family. CsoS4 subfamily. In terms of assembly, homopentamer.

Its subcellular location is the carboxysome. Probably forms vertices in the carboxysome, a polyhedral inclusion where RuBisCO (ribulose bisphosphate carboxylase, cbbL-cbbS) is sequestered. Has been modeled to induce curvature upon insertion into an otherwise flat hexagonal layer of major carboxysome subunits. This chain is Carboxysome shell vertex protein CsoS4A, found in Hydrogenovibrio crunogenus (strain DSM 25203 / XCL-2) (Thiomicrospira crunogena).